Reading from the N-terminus, the 485-residue chain is Pup--protein ligase (485 aa).

Glutamate 33 provides a ligand contact to Mg(2+). Position 76 (arginine 76) interacts with ATP. Mg(2+) is bound at residue tyrosine 78. The active-site Proton acceptor is aspartate 80. Glutamate 86 contributes to the Mg(2+) binding site. ATP contacts are provided by threonine 89 and tryptophan 451.

Belongs to the Pup ligase/Pup deamidase family. Pup-conjugating enzyme subfamily.

The catalysed reaction is ATP + [prokaryotic ubiquitin-like protein]-L-glutamate + [protein]-L-lysine = ADP + phosphate + N(6)-([prokaryotic ubiquitin-like protein]-gamma-L-glutamyl)-[protein]-L-lysine.. The protein operates within protein degradation; proteasomal Pup-dependent pathway. It participates in protein modification; protein pupylation. Its function is as follows. Catalyzes the covalent attachment of the prokaryotic ubiquitin-like protein modifier Pup to the proteasomal substrate proteins, thereby targeting them for proteasomal degradation. This tagging system is termed pupylation. The ligation reaction involves the side-chain carboxylate of the C-terminal glutamate of Pup and the side-chain amino group of a substrate lysine. This is Pup--protein ligase from Bifidobacterium longum subsp. infantis (strain ATCC 15697 / DSM 20088 / JCM 1222 / NCTC 11817 / S12).